The primary structure comprises 465 residues: Mothers against decapentaplegic homolog 5 (465 aa).

Residue T2 is modified to N-acetylthreonine. An MH1 domain is found at 13–137 (PAVKRLLGWK…YKRVESPVLP (125 aa)). 4 residues coordinate Zn(2+): C65, C110, C122, and H127. The segment at 163-251 (NEPHMPQNAT…DTSSNMIPQT (89 aa)) is disordered. Positions 169 to 182 (QNATFPDSFHQPNN) are enriched in polar residues. Pro residues predominate over residues 186–197 (PLSPNSPYPPSP). The span at 198–214 (ASSTYPNSPASSGPGSP) shows a compositional bias: low complexity. Positions 237-251 (NSQPMDTSSNMIPQT) are enriched in polar residues. The MH2 domain maps to 271–465 (WCSIVYYELN…SPLNPISSVS (195 aa)). 2 positions are modified to phosphoserine: S463 and S465.

This sequence belongs to the dwarfin/SMAD family. As to quaternary structure, homodimer. Forms trimers with the co-SMAD SMAD4. Interacts with PEBP2-alpha subunit and SMURF1. Interacts with SUV39H1 and SUV39H2. Interacts (via MH2 domain) with LEMD3. Interacts with WWP1. Interacts with TMEM119. Interacts with ZNF8. Interacts with RANBP3L. Interacts with HK1. Interacts with HGS; this interaction attenuates BMP signaling. In terms of processing, phosphorylated on serine by BMP (bone morphogenetic proteins) type 1 receptor kinase. Post-translationally, ubiquitin-mediated proteolysis by SMAD-specific E3 ubiquitin ligase SMURF1. In terms of tissue distribution, predominantly expressed in mesenchyme and somites during embryogenesis, and present in many tissues of the adult.

It localises to the cytoplasm. It is found in the nucleus. The protein resides in the mitochondrion. Transcriptional regulator that plays a role in various cellular processes including embryonic development, cell differentiation, angiogenesis and tissue homeostasis. Upon BMP ligand binding to their receptors at the cell surface, is phosphorylated by activated type I BMP receptors (BMPRIs) and associates with SMAD4 to form a heteromeric complex which translocates into the nucleus acting as transcription factor. In turn, the hetero-trimeric complex recognizes cis-regulatory elements containing Smad Binding Elements (SBEs) to modulate the outcome of the signaling network. Non-phosphorylated SMAD5 has a cytoplasmic role in energy metabolism regulation by promoting mitochondrial respiration and glycolysis in response to cytoplasmic pH changes. Mechanistically, interacts with hexokinase 1/HK1 and thereby accelerates glycolysis. The chain is Mothers against decapentaplegic homolog 5 (Smad5) from Mus musculus (Mouse).